The following is a 307-amino-acid chain: tRNA pseudouridine synthase B (307 aa).

Asp-48 functions as the Nucleophile in the catalytic mechanism.

This sequence belongs to the pseudouridine synthase TruB family. Type 1 subfamily.

The enzyme catalyses uridine(55) in tRNA = pseudouridine(55) in tRNA. Functionally, responsible for synthesis of pseudouridine from uracil-55 in the psi GC loop of transfer RNAs. This chain is tRNA pseudouridine synthase B, found in Pasteurella multocida (strain Pm70).